A 466-amino-acid chain; its full sequence is Soluble pyridine nucleotide transhydrogenase (466 aa).

Glu36–Cys45 is a binding site for FAD.

This sequence belongs to the class-I pyridine nucleotide-disulfide oxidoreductase family. FAD serves as cofactor.

The protein localises to the cytoplasm. The enzyme catalyses NAD(+) + NADPH = NADH + NADP(+). Its function is as follows. Conversion of NADPH, generated by peripheral catabolic pathways, to NADH, which can enter the respiratory chain for energy generation. The protein is Soluble pyridine nucleotide transhydrogenase of Enterobacter sp. (strain 638).